Consider the following 693-residue polypeptide: MWPQPYLPPHPMMLEESRQNKLAAAKKKLKEYQQRKSPGIPAGAKTKKKKTDSSPETTTSGGGHSPGDSQYQELAVALESSSVTISQLNENIESLKQQKKQVEHQLEEAKKTNNEIHKAQMERLETINILTLEKADLKTTLYHTKRAARHFEEESKDLAGRLQYSLQRIQELERALCAVSTQQQEEDRSSSCREAVLHRRLQQTIKERALLNAHVTQVTESLKQVQLERDEYAKHIKGERARWQERMWKMSVEARTLKEEKKRDIHRIQELERSLSELKNQMAKPPSLAPPAVTSVVEQLQDEAKHLRQEVEGLEGKLQSQVENNQALSLLSKEQKQRLQEQEEMLREQEVQRVREQERLCEQNERLREQQKTLQEQGERLRKQEQRLRKQEERLRKEEERLQKQEKRLWDQEERLWKKEERLQKQEERLALSQNHKLDKQLAEPQCSFEDLNNEKKSALQLEQQVKELQEKLDEEHLEAASQQNQQLETQLSLVALPGEGDGGQHLDSEEEEAPRPTPNIPEDLESREATSSFMDLPKEKADGTEQVERRELGFVQPSGVTDGMRESFTVYESQGAVPNTRHQEMEDVIRLAQKEEEMKVKLLELQELVLPLVGNHEGHGKFLIAAQNPADEPTPGAPAPQELGAAGEQDDFYEVSLDNNVEPAPGAAREGSPHDNPTVQQIVQLSPVMQDT.

The segment covering 1 to 11 (MWPQPYLPPHP) has biased composition (pro residues). 4 disordered regions span residues 1–72 (MWPQ…SQYQ), 497–551 (LPGE…VERR), 629–650 (NPADEPTPGAPAPQELGAAGEQ), and 660–679 (NNVEPAPGAAREGSPHDNPT). Residues 77–611 (ALESSSVTIS…KLLELQELVL (535 aa)) adopt a coiled-coil conformation. Over residues 537–551 (LPKEKADGTEQVERR) the composition is skewed to basic and acidic residues.

This sequence belongs to the GOLGA6 family.

The chain is Golgin subfamily A member 6B (GOLGA6B) from Homo sapiens (Human).